The primary structure comprises 408 residues: Serine/threonine-protein kinase UCNL (408 aa).

The Protein kinase domain maps to 21–341 (IKALKILGKG…AAEIKELAFF (321 aa)). ATP contacts are provided by residues 27-35 (LGKGATGTV) and lysine 54. Aspartate 152 acts as the Proton acceptor in catalysis. One can recognise an AGC-kinase C-terminal domain in the interval 342–408 (AGVRWDLLTE…CRKNDPFIEF (67 aa)).

It belongs to the protein kinase superfamily. AGC Ser/Thr protein kinase family. As to expression, expressed in the epidermis and cortex of the transition zone of the root apex. Expressed in rosette leaves, stems, flowers and siliques.

The protein localises to the cytoplasm. It is found in the nucleus. The enzyme catalyses L-seryl-[protein] + ATP = O-phospho-L-seryl-[protein] + ADP + H(+). The catalysed reaction is L-threonyl-[protein] + ATP = O-phospho-L-threonyl-[protein] + ADP + H(+). Regulates planar ovule integument development. The chain is Serine/threonine-protein kinase UCNL from Arabidopsis thaliana (Mouse-ear cress).